The sequence spans 161 residues: Small ribosomal subunit protein uS9 (161 aa).

Belongs to the universal ribosomal protein uS9 family.

The protein is Small ribosomal subunit protein uS9 of Bartonella henselae (strain ATCC 49882 / DSM 28221 / CCUG 30454 / Houston 1) (Rochalimaea henselae).